Consider the following 472-residue polypeptide: Glycosyl hydrolase family 109 protein (472 aa).

Residues 1 to 35 constitute a signal peptide (tat-type signal); that stretch reads MSQTPAVSRRLLLGSAAATGALATGIGSAAPVAAA. NAD(+) contacts are provided by residues 68–69, aspartate 90, 139–142, histidine 145, 159–160, and asparagine 188; these read NR, WEFH, and EL. Residues tyrosine 217, arginine 236, 248–251, and tyrosine 330 each bind substrate; that span reads YPMH. Tyrosine 248 lines the NAD(+) pocket.

The protein belongs to the Gfo/Idh/MocA family. Glycosyl hydrolase 109 subfamily. The cofactor is NAD(+). Predicted to be exported by the Tat system. The position of the signal peptide cleavage has not been experimentally proven.

Functionally, glycosidase. Has no alpha-N-acetylgalactosaminidase activity. The protein is Glycosyl hydrolase family 109 protein of Streptomyces coelicolor (strain ATCC BAA-471 / A3(2) / M145).